The sequence spans 571 residues: Urease subunit alpha (571 aa).

Positions 132-571 (GGIDAHIHFI…VALAQRYFLF (440 aa)) constitute a Urease domain. Positions 137, 139, and 220 each coordinate Ni(2+). Lys-220 carries the N6-carboxylysine modification. His-222 is a substrate binding site. 2 residues coordinate Ni(2+): His-249 and His-275. The Proton donor role is filled by His-323. Asp-363 contacts Ni(2+).

It belongs to the metallo-dependent hydrolases superfamily. Urease alpha subunit family. In terms of assembly, heterotrimer of UreA (gamma), UreB (beta) and UreC (alpha) subunits. Three heterotrimers associate to form the active enzyme. Ni cation is required as a cofactor. Carboxylation allows a single lysine to coordinate two nickel ions.

The protein localises to the cytoplasm. The catalysed reaction is urea + 2 H2O + H(+) = hydrogencarbonate + 2 NH4(+). The protein operates within nitrogen metabolism; urea degradation; CO(2) and NH(3) from urea (urease route): step 1/1. The chain is Urease subunit alpha from Halalkalibacterium halodurans (strain ATCC BAA-125 / DSM 18197 / FERM 7344 / JCM 9153 / C-125) (Bacillus halodurans).